We begin with the raw amino-acid sequence, 105 residues long: Iron-sulfur cluster assembly protein CyaY (105 aa).

It belongs to the frataxin family.

In terms of biological role, involved in iron-sulfur (Fe-S) cluster assembly. May act as a regulator of Fe-S biogenesis. The polypeptide is Iron-sulfur cluster assembly protein CyaY (Paraburkholderia phymatum (strain DSM 17167 / CIP 108236 / LMG 21445 / STM815) (Burkholderia phymatum)).